A 741-amino-acid chain; its full sequence is Catalase-peroxidase (741 aa).

The N-terminal stretch at 1–23 (MLKKIVTALGMSGMLLASSNAIA) is a signal peptide. The tryptophyl-tyrosyl-methioninium (Trp-Tyr) (with M-249) cross-link spans 102–223 (WHDAGTYRIY…YAATQMGLIY (122 aa)). His103 acts as the Proton acceptor in catalysis. Residues 223-249 (YVNPEGPDGKPDIKGAASEIRQAFRAM) constitute a cross-link (tryptophyl-tyrosyl-methioninium (Tyr-Met) (with W-102)). His264 contacts heme b.

It belongs to the peroxidase family. Peroxidase/catalase subfamily. In terms of assembly, homodimer or homotetramer. It depends on heme b as a cofactor. Formation of the three residue Trp-Tyr-Met cross-link is important for the catalase, but not the peroxidase activity of the enzyme.

It catalyses the reaction H2O2 + AH2 = A + 2 H2O. The catalysed reaction is 2 H2O2 = O2 + 2 H2O. Functionally, bifunctional enzyme with both catalase and broad-spectrum peroxidase activity. This Francisella tularensis subsp. tularensis (strain FSC 198) protein is Catalase-peroxidase.